Here is a 315-residue protein sequence, read N- to C-terminus: MDSSGGFQKHTCGHALLLLLLLLAGGAEAFRICAFNAQRLTLAKVAREYVMDTLVRILARCDITVLQEVVDSTGSAIPLLLRELNRFDGSGPYSSLSSPLLGRGAYKEKYAYIYRSHRTQVLNFYLYPDEDDLFAREPFVGQFSLPSKVLPSLVLVPLHTTPKAVEPELKALYEVFLDVSQRWQSEDVILLGDFNADCASLTKKRLDELVLRTQAGFHWAVADGVDTTVRASTHCTYDRIVLHGERLQSLLRNAGAFDFPQSFGLTEEEALNISDHYPVEVELSRAVHRIQPLSLATLLLSLLLLLLSPQLGLAA.

The signal sequence occupies residues 1–29; it reads MDSSGGFQKHTCGHALLLLLLLLAGGAEA. Residues Glu108 and His159 contribute to the active site. Cys198 and Cys235 are joined by a disulfide. Asn272 carries an N-linked (GlcNAc...) asparagine glycan.

It belongs to the DNase I family.

The protein localises to the endoplasmic reticulum. The protein is Deoxyribonuclease-1-like 1 (DNASE1L1) of Sus scrofa (Pig).